Reading from the N-terminus, the 185-residue chain is Ribosome-recycling factor (185 aa).

This sequence belongs to the RRF family.

Its subcellular location is the cytoplasm. In terms of biological role, responsible for the release of ribosomes from messenger RNA at the termination of protein biosynthesis. May increase the efficiency of translation by recycling ribosomes from one round of translation to another. This is Ribosome-recycling factor from Beutenbergia cavernae (strain ATCC BAA-8 / DSM 12333 / CCUG 43141 / JCM 11478 / NBRC 16432 / NCIMB 13614 / HKI 0122).